Reading from the N-terminus, the 151-residue chain is Large ribosomal subunit protein bL9 (151 aa).

The protein belongs to the bacterial ribosomal protein bL9 family.

Its function is as follows. Binds to the 23S rRNA. The chain is Large ribosomal subunit protein bL9 from Mycoplasmopsis agalactiae (strain NCTC 10123 / CIP 59.7 / PG2) (Mycoplasma agalactiae).